A 561-amino-acid polypeptide reads, in one-letter code: Type II methyltransferase M.BstVI (561 aa).

This sequence belongs to the N(4)/N(6)-methyltransferase family.

It catalyses the reaction a 2'-deoxyadenosine in DNA + S-adenosyl-L-methionine = an N(6)-methyl-2'-deoxyadenosine in DNA + S-adenosyl-L-homocysteine + H(+). A gamma subtype methylase, recognizes the double-stranded sequence 5'-CTCGAG-3', methylates A-5 on both strands, and protects the DNA from cleavage by the BstVI endonuclease. The sequence is that of Type II methyltransferase M.BstVI from Geobacillus stearothermophilus (Bacillus stearothermophilus).